A 188-amino-acid chain; its full sequence is Peptide methionine sulfoxide reductase MsrA (188 aa).

The segment at 1 to 25 (MEGNEKAEQKNATSEESTDIFENPG) is disordered. The active site involves Cys-37.

The protein belongs to the MsrA Met sulfoxide reductase family.

It catalyses the reaction L-methionyl-[protein] + [thioredoxin]-disulfide + H2O = L-methionyl-(S)-S-oxide-[protein] + [thioredoxin]-dithiol. The catalysed reaction is [thioredoxin]-disulfide + L-methionine + H2O = L-methionine (S)-S-oxide + [thioredoxin]-dithiol. Its function is as follows. Has an important function as a repair enzyme for proteins that have been inactivated by oxidation. Catalyzes the reversible oxidation-reduction of methionine sulfoxide in proteins to methionine. The sequence is that of Peptide methionine sulfoxide reductase MsrA from Methanosarcina acetivorans (strain ATCC 35395 / DSM 2834 / JCM 12185 / C2A).